Reading from the N-terminus, the 428-residue chain is MGKKLVVIGAQWGDEGKGKIVDLLTERAGAVVRFQGGHNAGHTLVVHGKKTVLHLIPSGIMHDHVMSYIGNGVVLCLRALFEEIKALTAEGIPVKERLRISPACALILPSHIALDQARETARGKDKIGTTGRGIGPCYEDKIARRGLRLEDLRHPDDFRQKMQALMTYHNFLLENYYHQTAVDIDATIEEWLAYGKDVLPLMEDVTLALQRHQEQNVIFEGAQGAMLDIDQGTYPFVTSSNTAAGSASCGSGVGPHQLDYILAITKAYTTRVGSGPFPSEQINDIGEHLAKVGVEVGASTGRRRRCGWLDLPALRRALLNSSFDGVCLTKLDVLDELDEIKICTAYCHHEQIIDVAPLGSESLAECEPVYETFTGWKTSTFGIKNEAELPQKARDYIAKIEEYLGIPVVIISTGADRSHTIMRQSLLE.

Residues 13-19 (GDEGKGK) and 41-43 (GHT) contribute to the GTP site. The active-site Proton acceptor is the Asp14. Residues Asp14 and Gly41 each coordinate Mg(2+). Residues 14–17 (DEGK), 39–42 (NAGH), Thr130, Arg144, Gln223, Thr238, and Arg302 contribute to the IMP site. His42 serves as the catalytic Proton donor. Position 298–304 (298–304 (ASTGRRR)) interacts with substrate. GTP is bound by residues Arg304, 330 to 332 (KLD), and 412 to 414 (STG).

It belongs to the adenylosuccinate synthetase family. Homodimer. Requires Mg(2+) as cofactor.

Its subcellular location is the cytoplasm. The catalysed reaction is IMP + L-aspartate + GTP = N(6)-(1,2-dicarboxyethyl)-AMP + GDP + phosphate + 2 H(+). It functions in the pathway purine metabolism; AMP biosynthesis via de novo pathway; AMP from IMP: step 1/2. Its function is as follows. Plays an important role in the de novo pathway of purine nucleotide biosynthesis. Catalyzes the first committed step in the biosynthesis of AMP from IMP. The protein is Adenylosuccinate synthetase of Dichelobacter nodosus (strain VCS1703A).